Consider the following 645-residue polypeptide: Threonine--tRNA ligase (645 aa).

The region spanning 1–63 is the TGS domain; it reads MEQINIQFPD…ETDGSIEIVT (63 aa). A catalytic region spans residues 242–540; that stretch reads DHRKIGKELE…LTEETKGAFP (299 aa). Zn(2+)-binding residues include Cys-336, His-387, and His-517.

Belongs to the class-II aminoacyl-tRNA synthetase family. As to quaternary structure, homodimer. Requires Zn(2+) as cofactor.

The protein localises to the cytoplasm. The enzyme catalyses tRNA(Thr) + L-threonine + ATP = L-threonyl-tRNA(Thr) + AMP + diphosphate + H(+). Its function is as follows. Catalyzes the attachment of threonine to tRNA(Thr) in a two-step reaction: L-threonine is first activated by ATP to form Thr-AMP and then transferred to the acceptor end of tRNA(Thr). Also edits incorrectly charged L-seryl-tRNA(Thr). In Staphylococcus aureus (strain JH1), this protein is Threonine--tRNA ligase.